The primary structure comprises 1153 residues: PPi-type phosphoenolpyruvate carboxykinase 2 (1153 aa).

The stretch at 1085-1131 (RQKLEVAKLNKDLAYLNKTIAEKPRLVETLNKQIAAVKEELQYVSSE) forms a coiled coil.

This sequence belongs to the PPi-type phosphoenolpyruvate carboxykinase family. As to quaternary structure, monomer and trimer; forms heterotrimers with PEPCK1 and PEPCK3.

It localises to the cytoplasm. It is found in the cytosol. It carries out the reaction oxaloacetate + diphosphate = phosphoenolpyruvate + phosphate + CO2. Its function is as follows. Inorganic pyrophosphate (PPi)-dependent phosphoenolpyruvate carboxykinase, which regulates the carbon flow of the central metabolism by fixing CO(2) to phosphoenolpyruvate to produce oxaloacetate. Can also produce pyruvate and diphosphate from phosphoenolpyruvate and phosphate. The polypeptide is PPi-type phosphoenolpyruvate carboxykinase 2 (Entamoeba histolytica (strain ATCC 30459 / HM-1:IMSS / ABRM)).